The sequence spans 206 residues: GTP-binding protein YPTC5 (206 aa).

15 to 22 is a binding site for GTP; sequence GDSGVGKT. The Effector region motif lies at 37 to 45; it reads YKATIGADF. GTP contacts are provided by residues 63–67 and 125–128; these read DTAGQ and NKID. S-geranylgeranyl cysteine attachment occurs at residues Cys205 and Cys206.

The protein belongs to the small GTPase superfamily. Rab family.

It is found in the cell membrane. Its function is as follows. Protein transport. Probably involved in vesicular traffic. The chain is GTP-binding protein YPTC5 (YPTC5) from Chlamydomonas reinhardtii (Chlamydomonas smithii).